Consider the following 412-residue polypeptide: Argininosuccinate synthase (412 aa).

10–18 provides a ligand contact to ATP; it reads AYSGGLDTS. Y89 lines the L-citrulline pocket. G119 provides a ligand contact to ATP. L-aspartate is bound by residues T121, N125, and D126. N125 lines the L-citrulline pocket. Residues R129, S177, E261, and Y273 each coordinate L-citrulline.

The protein belongs to the argininosuccinate synthase family. Type 1 subfamily. Homotetramer.

It localises to the cytoplasm. It carries out the reaction L-citrulline + L-aspartate + ATP = 2-(N(omega)-L-arginino)succinate + AMP + diphosphate + H(+). The protein operates within amino-acid biosynthesis; L-arginine biosynthesis; L-arginine from L-ornithine and carbamoyl phosphate: step 2/3. This chain is Argininosuccinate synthase, found in Bifidobacterium longum subsp. infantis (strain ATCC 15697 / DSM 20088 / JCM 1222 / NCTC 11817 / S12).